Reading from the N-terminus, the 520-residue chain is TnpB-like protein L79 (520 aa).

The span at 21-47 (GSKTKKKVFVKKKPPDKKPLKKPVKKT) shows a compositional bias: basic residues. Residues 21–52 (GSKTKKKVFVKKKPPDKKPLKKPVKKTVKTDK) are disordered. Residues cysteine 474, cysteine 477, cysteine 491, and cysteine 494 each coordinate Zn(2+).

It in the central section; belongs to the transposase 2 family. This sequence in the C-terminal section; belongs to the transposase 35 family.

The chain is TnpB-like protein L79 from Acanthamoeba polyphaga mimivirus (APMV).